The sequence spans 490 residues: Transcription factor MYB101 (490 aa).

The tract at residues 1-21 (MDGGGETTATATMEGRGLKKG) is disordered. 2 HTH myb-type domains span residues 15–67 (GRGL…ANHL) and 68–122 (RPNL…KRRQ). 2 consecutive DNA-binding regions (H-T-H motif) follow at residues 43-67 (WNAV…ANHL) and 95-118 (WARM…NTRM). The disordered stretch occupies residues 168 to 206 (YTNSSNTSSSSSSFSSSSSQPSKRLRPDPLVSTNPGLNP). Low complexity predominate over residues 169 to 186 (TNSSNTSSSSSSFSSSSS).

Present mostly in flowers, siliques and floral shoot tips. Expression is restricted to the subapical pith cells of both vegetative and flowering plants and to the hypocotyl hook. Expressed in pollen grains and pollen tube. Mostly expressed in mature pollen grains, and, to a lower extent, in inflorescences and siliques.

It is found in the nucleus. Functionally, transcription activator. Binds to 5'-CAACTGTC-3' and/or 5'-TAACAAA-3' motif in target gene promoter (e.g. alpha-amylase) to promote their expression. Positive regulator of abscisic acid (ABA) responses leading to growth arrest during seed germination. Promotes the expression of aleurone-related genes (e.g. CP1, CP, GASA1, BXL1 and BXL2) in seeds. Together with MYB33 and MYB65, promotes the programmed cell death (PCD) leading to vacuolation of protein storage vacuoles (PSVs) in the aleurone layers during seed germination. Maybe involved in the regulation of leaves lamina morphogenesis. Involved in pollen grain development. Together with MYB97 and MYB120, functions as a male factor that controls pollen tube-synergid interaction in fertilization. Required for pollen tube growth arrest and sperm cell release in the female gametophyte, probably via the regulation of pollen tube-specific gene expression. In Arabidopsis thaliana (Mouse-ear cress), this protein is Transcription factor MYB101.